The primary structure comprises 419 residues: Phospho-N-acetylmuramoyl-pentapeptide-transferase (419 aa).

10 helical membrane-spanning segments follow: residues 22–42 (YVSF…TVIG), 72–92 (TPTM…LLLA), 99–119 (ILLM…DDYI), 135–155 (IIGQ…NPAV), 208–228 (VLFG…FISN), 238–258 (GLAT…AYVS), 278–298 (LTIF…YNAY), 303–323 (FMGD…ALII), 328–348 (LLPI…IQVF), and 396–416 (KITV…IATL).

It belongs to the glycosyltransferase 4 family. MraY subfamily. Requires Mg(2+) as cofactor.

The protein localises to the cell inner membrane. The catalysed reaction is UDP-N-acetyl-alpha-D-muramoyl-L-alanyl-gamma-D-glutamyl-meso-2,6-diaminopimeloyl-D-alanyl-D-alanine + di-trans,octa-cis-undecaprenyl phosphate = di-trans,octa-cis-undecaprenyl diphospho-N-acetyl-alpha-D-muramoyl-L-alanyl-D-glutamyl-meso-2,6-diaminopimeloyl-D-alanyl-D-alanine + UMP. The protein operates within cell wall biogenesis; peptidoglycan biosynthesis. Its function is as follows. Catalyzes the initial step of the lipid cycle reactions in the biosynthesis of the cell wall peptidoglycan: transfers peptidoglycan precursor phospho-MurNAc-pentapeptide from UDP-MurNAc-pentapeptide onto the lipid carrier undecaprenyl phosphate, yielding undecaprenyl-pyrophosphoryl-MurNAc-pentapeptide, known as lipid I. The polypeptide is Phospho-N-acetylmuramoyl-pentapeptide-transferase (Porphyromonas gingivalis (strain ATCC 33277 / DSM 20709 / CIP 103683 / JCM 12257 / NCTC 11834 / 2561)).